Here is a 409-residue protein sequence, read N- to C-terminus: Threonine dehydratase-like protein AKTS1-1 (409 aa).

The tract at residues 1–21 (MADYLRQVMPENDSDSEALPR) is disordered. Position 111 is an N6-(pyridoxal phosphate)lysine (lysine 111). Pyridoxal 5'-phosphate is bound by residues asparagine 138, 239 to 243 (GEGSL), and serine 368.

This sequence belongs to the serine/threonine dehydratase family. Pyridoxal 5'-phosphate serves as cofactor.

It participates in mycotoxin biosynthesis. Its function is as follows. Threonine dehydratase-like protein; part of the gene clusters that mediate the biosynthesis of the host-selective toxins (HSTs) AK-toxins responsible for Japanese pear black spot disease by the Japanese pear pathotype. AK-toxins are esters of 9,10-epoxy 8-hydroxy 9-methyldecatrienoic acid (EDA). On cellular level, AK-toxins affect plasma membrane of susceptible cells and cause a sudden increase in loss of K(+) after a few minutes of toxin treatment. The acyl-CoA ligase AKT1, the hydrolase AKT2 and enoyl-CoA hydratase AKT3 are all involved in the biosynthesis of the AK-, AF- and ACT-toxin common 9,10-epoxy-8-hydroxy-9-methyl-decatrienoic acid (EDA) structural moiety. Part of the EDA biosynthesis occurs in the peroxisome since these 3 enzymes are localized in peroxisomes. The exact roles of the 3 enzymes, as well as of additional AK-toxin clusters enzymes, including AKT4, AKT6 and AKTS1, have still to be elucidated. The Cytochrome P450 monooxygenase AKT7 on the other side functions to limit production of EDA and AK-toxin, probably via the catalysis of a side reaction of EDA or its precursor. The sequence is that of Threonine dehydratase-like protein AKTS1-1 from Alternaria alternata (Alternaria rot fungus).